Consider the following 307-residue polypeptide: MSAAPAQAHPPSRLTLYRQLIRWDRPAGWLLLLWPTLGALWLAAGGFPGWHLLAVFTLGTVLMRSAGCCINDVADREFDRHVKRTAERPVTRGAVSVKEALAVGAVLALAAFALVLTTNALTIALSFPALAVAVAYPYAKRCVAMPQAVLGVAFSFGIPMAFSAVRGGNGAWGLAALNAAVPWWAWGLLIGNLFWVLAYDTEYAMVDRDDDLKIGIKTSAITLGRHDVTAVMSFYQLYLLAWGAIGFWQGLGVAFAAGLAAAAVQVAWHHTLIRDRSRDGCFKAFRLNHWVGFAVFAGIVVDLGWRA.

7 helical membrane passes run 27–47 (AGWL…AGGF), 50–70 (WHLL…GCCI), 101–121 (LAVG…TNAL), 142–162 (CVAM…PMAF), 179–199 (AAVP…VLAY), 239–259 (LLAW…AAGL), and 285–305 (FRLN…DLGW).

This sequence belongs to the UbiA prenyltransferase family. It depends on Mg(2+) as a cofactor.

The protein resides in the cell inner membrane. It carries out the reaction all-trans-octaprenyl diphosphate + 4-hydroxybenzoate = 4-hydroxy-3-(all-trans-octaprenyl)benzoate + diphosphate. The protein operates within cofactor biosynthesis; ubiquinone biosynthesis. Catalyzes the prenylation of para-hydroxybenzoate (PHB) with an all-trans polyprenyl group. Mediates the second step in the final reaction sequence of ubiquinone-8 (UQ-8) biosynthesis, which is the condensation of the polyisoprenoid side chain with PHB, generating the first membrane-bound Q intermediate 3-octaprenyl-4-hydroxybenzoate. The protein is 4-hydroxybenzoate octaprenyltransferase of Methylibium petroleiphilum (strain ATCC BAA-1232 / LMG 22953 / PM1).